Reading from the N-terminus, the 4568-residue chain is Dynein beta chain, flagellar outer arm (4568 aa).

Residues methionine 1 to alanine 1880 are stem. Coiled-coil stretches lie at residues phenylalanine 277–aspartate 293, glutamate 1158–leucine 1175, lysine 1372–aspartate 1400, glutamate 1614–phenylalanine 1650, and glutamine 1778–leucine 1825. Residues glycine 1144–alanine 1166 form a disordered region. The span at glutamate 1150–alanine 1166 shows a compositional bias: basic and acidic residues. 4 AAA regions span residues tyrosine 1881 to valine 2102, glutamate 2164 to lysine 2385, glutamine 2493 to glycine 2738, and glutamate 2841 to tyrosine 3090. Residues glycine 1919–threonine 1926, glycine 2202–threonine 2209, and glycine 2530–serine 2537 contribute to the ATP site. The stretch at leucine 2831–valine 2848 forms a coiled coil. Glycine 2879–glutamine 2886 provides a ligand contact to ATP. Coiled coils occupy residues lysine 3106–isoleucine 3162, lysine 3339–serine 3425, and histidine 3648–glutamate 3728. The stalk stretch occupies residues lysine 3106–serine 3425. AAA regions lie at residues leucine 3481–glutamate 3711 and methionine 3937–asparagine 4172.

It belongs to the dynein heavy chain family. As to quaternary structure, consists of at least 3 heavy chains (alpha, beta and gamma), 2 intermediate chains and 8 light chains.

It is found in the cell projection. The protein resides in the cilium. It localises to the flagellum. The protein localises to the cytoplasm. Its subcellular location is the cytoskeleton. It is found in the flagellum axoneme. In terms of biological role, force generating protein of eukaryotic cilia and flagella. Produces force towards the minus ends of microtubules. Dynein has ATPase activity; the force-producing power stroke is thought to occur on release of ADP. The polypeptide is Dynein beta chain, flagellar outer arm (ODA4) (Chlamydomonas reinhardtii (Chlamydomonas smithii)).